Reading from the N-terminus, the 444-residue chain is ATP-dependent protease ATPase subunit HslU (444 aa).

Residues Ile20 and 62–67 (GVGKTE) contribute to the ATP site. The interval 130–158 (EDRILDALVPPPRGASGEPERGEDNSARQ) is disordered. ATP contacts are provided by Asp257, Glu322, and Arg394.

Belongs to the ClpX chaperone family. HslU subfamily. As to quaternary structure, a double ring-shaped homohexamer of HslV is capped on each side by a ring-shaped HslU homohexamer. The assembly of the HslU/HslV complex is dependent on binding of ATP.

The protein localises to the cytoplasm. Its function is as follows. ATPase subunit of a proteasome-like degradation complex; this subunit has chaperone activity. The binding of ATP and its subsequent hydrolysis by HslU are essential for unfolding of protein substrates subsequently hydrolyzed by HslV. HslU recognizes the N-terminal part of its protein substrates and unfolds these before they are guided to HslV for hydrolysis. This Bordetella bronchiseptica (strain ATCC BAA-588 / NCTC 13252 / RB50) (Alcaligenes bronchisepticus) protein is ATP-dependent protease ATPase subunit HslU.